Reading from the N-terminus, the 688-residue chain is Translation initiation factor IF-2 (688 aa).

Basic and acidic residues predominate over residues 50–62; it reads LLSGKEKSEKTKE. The disordered stretch occupies residues 50 to 95; it reads LLSGKEKSEKTKEEDDEIETTAKNPIKESINNKKSNKRDDKKEKVN. Positions 72–82 are enriched in low complexity; the sequence is KNPIKESINNK. The span at 86-95 shows a compositional bias: basic and acidic residues; it reads KRDDKKEKVN. Positions 187–354 constitute a tr-type G domain; sequence KRSPIITVMG…MILLSSEILE (168 aa). Residues 196–203 are G1; it reads GHVDHGKT. Residue 196-203 coordinates GTP; sequence GHVDHGKT. The segment at 221 to 225 is G2; sequence GITQH. Residues 242-245 are G3; that stretch reads DTPG. GTP contacts are provided by residues 242-246 and 296-299; these read DTPGH and NKID. The interval 296-299 is G4; the sequence is NKID. Residues 332–334 are G5; the sequence is SAH.

It belongs to the TRAFAC class translation factor GTPase superfamily. Classic translation factor GTPase family. IF-2 subfamily.

It is found in the cytoplasm. Its function is as follows. One of the essential components for the initiation of protein synthesis. Protects formylmethionyl-tRNA from spontaneous hydrolysis and promotes its binding to the 30S ribosomal subunits. Also involved in the hydrolysis of GTP during the formation of the 70S ribosomal complex. The sequence is that of Translation initiation factor IF-2 from Clostridium botulinum (strain 657 / Type Ba4).